A 476-amino-acid polypeptide reads, in one-letter code: 1-aminocyclopropane-1-carboxylate synthase 4 (476 aa).

The residue at position 282 (Lys-282) is an N6-(pyridoxal phosphate)lysine.

It belongs to the class-I pyridoxal-phosphate-dependent aminotransferase family. In terms of assembly, homodimer. Requires pyridoxal 5'-phosphate as cofactor.

It catalyses the reaction S-adenosyl-L-methionine = 1-aminocyclopropane-1-carboxylate + S-methyl-5'-thioadenosine + H(+). Its pathway is alkene biosynthesis; ethylene biosynthesis via S-adenosyl-L-methionine; ethylene from S-adenosyl-L-methionine: step 1/2. In terms of biological role, catalyzes the formation of 1-aminocyclopropane-1-carboxylate, a direct precursor of ethylene in higher plants. In Solanum lycopersicum (Tomato), this protein is 1-aminocyclopropane-1-carboxylate synthase 4 (ACS4).